Reading from the N-terminus, the 391-residue chain is Methylthioribose-1-phosphate isomerase (391 aa).

Asp267 acts as the Proton donor in catalysis.

Belongs to the eIF-2B alpha/beta/delta subunits family. MtnA subfamily.

It is found in the cytoplasm. The protein localises to the nucleus. The catalysed reaction is 5-(methylsulfanyl)-alpha-D-ribose 1-phosphate = 5-(methylsulfanyl)-D-ribulose 1-phosphate. Its pathway is amino-acid biosynthesis; L-methionine biosynthesis via salvage pathway; L-methionine from S-methyl-5-thio-alpha-D-ribose 1-phosphate: step 1/6. Catalyzes the interconversion of methylthioribose-1-phosphate (MTR-1-P) into methylthioribulose-1-phosphate (MTRu-1-P). The protein is Methylthioribose-1-phosphate isomerase of Ajellomyces capsulatus (strain NAm1 / WU24) (Darling's disease fungus).